Here is a 197-residue protein sequence, read N- to C-terminus: Pyridoxal 5'-phosphate synthase subunit PdxT (197 aa).

Residue 50–52 participates in L-glutamine binding; that stretch reads GES. Residue Cys82 is the Nucleophile of the active site. L-glutamine is bound by residues Arg111 and 140-141; that span reads IR. Residues His176 and Glu178 each act as charge relay system in the active site.

It belongs to the glutaminase PdxT/SNO family. In the presence of PdxS, forms a dodecamer of heterodimers. Only shows activity in the heterodimer.

The enzyme catalyses aldehydo-D-ribose 5-phosphate + D-glyceraldehyde 3-phosphate + L-glutamine = pyridoxal 5'-phosphate + L-glutamate + phosphate + 3 H2O + H(+). It catalyses the reaction L-glutamine + H2O = L-glutamate + NH4(+). The protein operates within cofactor biosynthesis; pyridoxal 5'-phosphate biosynthesis. Its function is as follows. Catalyzes the hydrolysis of glutamine to glutamate and ammonia as part of the biosynthesis of pyridoxal 5'-phosphate. The resulting ammonia molecule is channeled to the active site of PdxS. The polypeptide is Pyridoxal 5'-phosphate synthase subunit PdxT (Streptomyces griseus subsp. griseus (strain JCM 4626 / CBS 651.72 / NBRC 13350 / KCC S-0626 / ISP 5235)).